Consider the following 158-residue polypeptide: NAD(P)H-quinone oxidoreductase subunit N (158 aa).

This sequence belongs to the complex I NdhN subunit family. NDH-1 can be composed of about 15 different subunits; different subcomplexes with different compositions have been identified which probably have different functions.

The protein resides in the cellular thylakoid membrane. The enzyme catalyses a plastoquinone + NADH + (n+1) H(+)(in) = a plastoquinol + NAD(+) + n H(+)(out). It catalyses the reaction a plastoquinone + NADPH + (n+1) H(+)(in) = a plastoquinol + NADP(+) + n H(+)(out). NDH-1 shuttles electrons from an unknown electron donor, via FMN and iron-sulfur (Fe-S) centers, to quinones in the respiratory and/or the photosynthetic chain. The immediate electron acceptor for the enzyme in this species is believed to be plastoquinone. Couples the redox reaction to proton translocation, and thus conserves the redox energy in a proton gradient. Cyanobacterial NDH-1 also plays a role in inorganic carbon-concentration. This is NAD(P)H-quinone oxidoreductase subunit N from Prochlorococcus marinus (strain MIT 9215).